A 685-amino-acid polypeptide reads, in one-letter code: MQDIQLDTLLSEDVTPENASQVMQALSQSLNEHNIRYYVDDAPSITDSEYDRLMQRLLKLEALYPHLIVADSPTQRVGGLALAKFDQITHLKPMLSLDNAFDEADFSAFHKRVTDKVGEVSFCCEPKLDGLAVSILYRHGVLERAATRGDGSVGEDITENVKTIKSIPLKLRGNDFPELVEVRGEAFMPKAAFEALNDRARAKDEKLFVNPRNAAAGSLRQLDSKITAARSLAFYAYALGVVEPDSHPLAKTHFEQLQQLKSWGLPISSEIKVCAELSQVYDYYKDILTRRSDLAFEIDGVVMKVNDIAQQQRLGFVAKSPRWAIAYKFPAQEEMTLLEGVDFQVGRTGAVTPVARLKPVFVGGVTVSNATLHNADEIARLGIKVGDTVIIRRAGDVIPQIVAIVPERRPETATDIVFPHNCPVCGSLVERLEGEAVARCSGGLFCEAQRKEAIKHFASRKALDIDGMGDKVVEQLIDKELVQSPADLFKLTASMMTMLDRMGMKSATNLAAAIEAAKTTTLARFLYALGIREVGEATAANLAAHFASLDALRVATVEQLTEVEDVGAVVAQHVAHFFAQPHNLEVIDALIAAGVHWPAIEAPSADAQPLKGQTWVLTGTLNQLNRNDAKAQLQALGAKVAGSVSKNTDCLVAGEAAGSKLAKAQELGVKVMDEDELLALLAANA.

NAD(+)-binding positions include aspartate 47–aspartate 51, serine 96–leucine 97, and glutamate 125. Residue lysine 127 is the N6-AMP-lysine intermediate of the active site. NAD(+) contacts are provided by arginine 148, glutamate 185, lysine 304, and lysine 328. Zn(2+) contacts are provided by cysteine 422, cysteine 425, cysteine 440, and cysteine 446. The 81-residue stretch at alanine 605–alanine 685 folds into the BRCT domain.

This sequence belongs to the NAD-dependent DNA ligase family. LigA subfamily. Requires Mg(2+) as cofactor. Mn(2+) serves as cofactor.

It catalyses the reaction NAD(+) + (deoxyribonucleotide)n-3'-hydroxyl + 5'-phospho-(deoxyribonucleotide)m = (deoxyribonucleotide)n+m + AMP + beta-nicotinamide D-nucleotide.. Its function is as follows. DNA ligase that catalyzes the formation of phosphodiester linkages between 5'-phosphoryl and 3'-hydroxyl groups in double-stranded DNA using NAD as a coenzyme and as the energy source for the reaction. It is essential for DNA replication and repair of damaged DNA. In Shewanella baltica (strain OS195), this protein is DNA ligase.